Consider the following 90-residue polypeptide: Defensin-like protein 193 (90 aa).

An N-terminal signal peptide occupies residues 1–27 (MAMKSVSTLAVFAILFLVIVEMPEIKA). 4 disulfide bridges follow: Cys-32/Cys-86, Cys-45/Cys-69, Cys-54/Cys-81, and Cys-58/Cys-83.

The protein belongs to the DEFL family. Protease inhibitor I18 (RTI/MTI-2) subfamily.

It localises to the secreted. This Arabidopsis thaliana (Mouse-ear cress) protein is Defensin-like protein 193 (ATTI2).